The following is a 263-amino-acid chain: Diphthine synthase (263 aa).

S-adenosyl-L-methionine-binding positions include Leu11, Asp89, Ala92, 117 to 118 (SV), Leu166, and Leu208.

It belongs to the diphthine synthase family. Homodimer.

It catalyses the reaction 2-[(3S)-amino-3-carboxypropyl]-L-histidyl-[translation elongation factor 2] + 3 S-adenosyl-L-methionine = diphthine-[translation elongation factor 2] + 3 S-adenosyl-L-homocysteine + 3 H(+). The protein operates within protein modification; peptidyl-diphthamide biosynthesis. Functionally, S-adenosyl-L-methionine-dependent methyltransferase that catalyzes the trimethylation of the amino group of the modified target histidine residue in translation elongation factor 2 (EF-2), to form an intermediate called diphthine. The three successive methylation reactions represent the second step of diphthamide biosynthesis. In Methanopyrus kandleri (strain AV19 / DSM 6324 / JCM 9639 / NBRC 100938), this protein is Diphthine synthase.